The primary structure comprises 222 residues: Protein-L-isoaspartate O-methyltransferase (222 aa).

The active site involves serine 73.

The protein belongs to the methyltransferase superfamily. L-isoaspartyl/D-aspartyl protein methyltransferase family.

It localises to the cytoplasm. It carries out the reaction [protein]-L-isoaspartate + S-adenosyl-L-methionine = [protein]-L-isoaspartate alpha-methyl ester + S-adenosyl-L-homocysteine. Catalyzes the methyl esterification of L-isoaspartyl residues in peptides and proteins that result from spontaneous decomposition of normal L-aspartyl and L-asparaginyl residues. It plays a role in the repair and/or degradation of damaged proteins. The chain is Protein-L-isoaspartate O-methyltransferase from Chromobacterium violaceum (strain ATCC 12472 / DSM 30191 / JCM 1249 / CCUG 213 / NBRC 12614 / NCIMB 9131 / NCTC 9757 / MK).